The primary structure comprises 376 residues: Glutamate 5-kinase (376 aa).

An ATP-binding site is contributed by Lys-15. Substrate is bound by residues Ser-55, Asp-141, and Asn-153. Residues 173–174 and 215–221 each bind ATP; these read SD and TGGMQTK. The region spanning 280–361 is the PUA domain; that stretch reads AGRLTVDAGA…HAIAEVLDEA (82 aa).

It belongs to the glutamate 5-kinase family.

The protein localises to the cytoplasm. It catalyses the reaction L-glutamate + ATP = L-glutamyl 5-phosphate + ADP. The protein operates within amino-acid biosynthesis; L-proline biosynthesis; L-glutamate 5-semialdehyde from L-glutamate: step 1/2. Catalyzes the transfer of a phosphate group to glutamate to form L-glutamate 5-phosphate. This Salinibacter ruber (strain DSM 13855 / M31) protein is Glutamate 5-kinase.